Reading from the N-terminus, the 518-residue chain is MTGPVNPDDRRSFSSRTPVNENPDGVQYRRGFVTRHQVSGWRFVMRRIASGVALHDTRMLVDPLRTQSRAVLTGALILVTGLVGCFIFSLFRPGGVPGNNAILADRSTSALYVRVGEQLHPVLNLTSARLISGSPDNPTMVKTSEIDKFPRGNLLGIPGAPERMVQNAATDAEWTVCDAVGGANPGVTVIAGPLGADGERAAPLPPDHAVLVHSDAEPNPGDWLLWDGKRSPIDLADRAVTDALGLGGQALAPRPIAAGLFNAVPAAPALTAPVIPDAGAAPQFELSLPVPVGAVVVAYDADNTARYYAVLSDGLQPISPVLAAILRNTDSHGFAQPPRLGPDEVARTPMSRGLDTSAYPDNPVTLVEASAHPVTCAHWTKPSDAAESSLSVLSGAVLPLAEGLHTVDLVGAGAGGAANRVALTPGTGYFVQTVGAEPGSPTAGSMFWVSDTGVRYGIDTAEDDKVVAALGLSTSPLPVPWSVLSQFAAGPALSRGDALVAHDAVSTNPNSARMEASR.

Positions 1 to 26 (MTGPVNPDDRRSFSSRTPVNENPDGV) are disordered. Residues 71–91 (VLTGALILVTGLVGCFIFSLF) form a helical membrane-spanning segment.

Belongs to the EccB family. Part of the ESX-3 / type VII secretion system (T7SS), which is composed of cytosolic and membrane components. The ESX-3 membrane complex is composed of EccB3, EccC3, EccD3 and EccE3.

The protein resides in the cell inner membrane. Its function is as follows. An ATPase. Part of the ESX-3 specialized secretion system, which is required for siderophore-mediated iron acquisition and for the secretion of EsxH and EsxG. This chain is ESX-3 secretion system ATPase EccB3, found in Mycolicibacterium smegmatis (strain ATCC 700084 / mc(2)155) (Mycobacterium smegmatis).